Reading from the N-terminus, the 131-residue chain is Peptide methionine sulfoxide reductase MsrB (131 aa).

The region spanning 8 to 130 (DAEWRAQLTD…NSVCLDLKRS (123 aa)) is the MsrB domain. 4 residues coordinate Zn(2+): cysteine 47, cysteine 50, cysteine 96, and cysteine 99. Residue cysteine 119 is the Nucleophile of the active site.

This sequence belongs to the MsrB Met sulfoxide reductase family. Zn(2+) serves as cofactor.

The catalysed reaction is L-methionyl-[protein] + [thioredoxin]-disulfide + H2O = L-methionyl-(R)-S-oxide-[protein] + [thioredoxin]-dithiol. The polypeptide is Peptide methionine sulfoxide reductase MsrB (Alkalilimnicola ehrlichii (strain ATCC BAA-1101 / DSM 17681 / MLHE-1)).